The sequence spans 279 residues: Pantothenate synthetase (279 aa).

26-33 (MGALHSGH) is a binding site for ATP. The active-site Proton donor is the His33. Gln57 lines the (R)-pantoate pocket. A beta-alanine-binding site is contributed by Gln57. An ATP-binding site is contributed by 147 to 150 (GQKD). Residue Gln153 coordinates (R)-pantoate. Residues Ile176 and 184-187 (ESSR) contribute to the ATP site.

It belongs to the pantothenate synthetase family. In terms of assembly, homodimer.

Its subcellular location is the cytoplasm. It carries out the reaction (R)-pantoate + beta-alanine + ATP = (R)-pantothenate + AMP + diphosphate + H(+). It functions in the pathway cofactor biosynthesis; (R)-pantothenate biosynthesis; (R)-pantothenate from (R)-pantoate and beta-alanine: step 1/1. Its function is as follows. Catalyzes the condensation of pantoate with beta-alanine in an ATP-dependent reaction via a pantoyl-adenylate intermediate. The sequence is that of Pantothenate synthetase from Corynebacterium glutamicum (strain R).